We begin with the raw amino-acid sequence, 326 residues long: MFFDREKELEELTDLVSSKPSMITFTYGPINSGKTTLLIEFSKRLPREYIVFNINLRGRFIREEKDFIKVLFMKKEESESIKNSYKGIPIPEGILNEILENPFLFLEEYFEEINNSGRIPVLILDELQVIGDLRIDDLLIYKLFNFFVRLTKELHLAHVFVATSDSLFLERVHGEAMLHGRSRFMLVDDFDERTTLEFLTSNGLSEEEAKIAWHYLGGKPSYLVDLLQRSRIRVEDYCKEALKWRTSQILDSLYTLKGRKLRKVIELLSKFRENDEITYGPLSEEIVWSVRNNILFADPRERKLRPQGRLEKHAIELALEKLRNNF.

Residue 28–35 coordinates ATP; it reads GPINSGKT.

It belongs to the archaeal ATPase family.

This is an uncharacterized protein from Pyrococcus abyssi (strain GE5 / Orsay).